A 462-amino-acid chain; its full sequence is L-seryl-tRNA(Sec) selenium transferase (462 aa).

The residue at position 292 (Lys-292) is an N6-(pyridoxal phosphate)lysine.

The protein belongs to the SelA family. The cofactor is pyridoxal 5'-phosphate.

The protein localises to the cytoplasm. It catalyses the reaction L-seryl-tRNA(Sec) + selenophosphate + H(+) = L-selenocysteinyl-tRNA(Sec) + phosphate. It functions in the pathway aminoacyl-tRNA biosynthesis; selenocysteinyl-tRNA(Sec) biosynthesis; selenocysteinyl-tRNA(Sec) from L-seryl-tRNA(Sec) (bacterial route): step 1/1. In terms of biological role, converts seryl-tRNA(Sec) to selenocysteinyl-tRNA(Sec) required for selenoprotein biosynthesis. The polypeptide is L-seryl-tRNA(Sec) selenium transferase (Clostridium perfringens (strain ATCC 13124 / DSM 756 / JCM 1290 / NCIMB 6125 / NCTC 8237 / Type A)).